The chain runs to 423 residues: MFPMKDHSALEQHTLSRDELRRRKGYKKGLQLSILLLGEKGSGKSTFLNNLCGQDISLSDGDYDDDDDKVTNNVTPENGNAIEDIDPGYKTAHLSPGLKLVTRRVYLNDELGVPITLDIILFPGCGDNVDNSQSSVVIKNYLDQQFANVLKEEVRIKRNTKETDGRPHVCLYFLKSTPRGVKKFDIELMKTICDKVNLIPIIPKADGLTETELNLHKDIVRQEISQNNIRVFDFKSDTLGETLALYDMDIDSSSAKSKYDNDTKIKEISPFAIVCSKTFNKNSENRVEHIRTYEWGSLVVEDQNTSDFIYLKAILLGSHLQELKDVTNNVLYENYRAKVLTEKKNNYDIPNYSYIDETSRGSVSNVSTRRNSASRTLGNPDTNDENAYQIHKEIDEKNRIIEDYQRKIDLLEKMLAAPHQNKV.

Positions 28 to 342 (KGLQLSILLL…ENYRAKVLTE (315 aa)) constitute a Septin-type G domain. The interval 38 to 45 (GEKGSGKS) is G1 motif. Residues 38 to 45 (GEKGSGKS), Gly-124, 204 to 212 (KADGLTETE), and Arg-291 each bind GTP. A G3 motif region spans residues 121–124 (LFPG). The segment at 203 to 206 (PKAD) is G4 motif. Polar residues predominate over residues 360–381 (RGSVSNVSTRRNSASRTLGNPD). Positions 360–385 (RGSVSNVSTRRNSASRTLGNPDTNDE) are disordered. A coiled-coil region spans residues 384–417 (DENAYQIHKEIDEKNRIIEDYQRKIDLLEKMLAA).

The protein belongs to the TRAFAC class TrmE-Era-EngA-EngB-Septin-like GTPase superfamily. Septin GTPase family. In terms of assembly, interacts with itself. Interacts with CDC11 and SPR3; probably to form a ring at the bud neck.

It is found in the membrane. It localises to the bud neck. Its function is as follows. Septins are GTPases involved in cytokinesis that assemble into filaments and form a ring at the cleavage site. May act by recruiting MYO1 and HOF1, a protein involved in septation, to the site of cleavage. Septins are also involved in cell morphogenesis, bud site selection, chitin deposition, cell cycle regulation, cell compartmentalization and spore wall formation. This Saccharomyces cerevisiae (strain ATCC 204508 / S288c) (Baker's yeast) protein is Sporulation-regulated protein 28 (SPR28).